We begin with the raw amino-acid sequence, 72 residues long: Seed trypsin/chymotrypsin inhibitor IVB (72 aa).

7 disulfide bridges follow: Cys-8/Cys-61, Cys-9/Cys-24, Cys-12/Cys-57, Cys-14/Cys-22, Cys-31/Cys-38, Cys-35/Cys-50, and Cys-40/Cys-48.

It belongs to the Bowman-Birk serine protease inhibitor family. As to expression, seed.

Functionally, inhibitor of trypsin and of chymotrypsin. May function as a natural phytochemical defense against predators. This Pisum sativum (Garden pea) protein is Seed trypsin/chymotrypsin inhibitor IVB.